A 417-amino-acid polypeptide reads, in one-letter code: Delta-aminolevulinic acid dehydratase, chloroplastic (417 aa).

The transit peptide at 1–40 directs the protein to the chloroplast; it reads MAALLVPGGGAAPGLVWRRRRAAVQCAAASPSSPDPSWRT. The interval 63 to 92 is disordered; the sequence is VVSGNPPAAPAAPAKAKAPPGTPVVKPLRL. The active-site Schiff-base intermediate with substrate is lysine 286. 5-aminolevulinate is bound by residues arginine 296 and lysine 308. Position 324 (glutamate 324) interacts with Mg(2+). Lysine 339 acts as the Schiff-base intermediate with substrate in catalysis. 5-aminolevulinate is bound by residues serine 365 and tyrosine 404.

It belongs to the ALAD family. In terms of assembly, homooctamer. The cofactor is Mg(2+).

The protein localises to the plastid. The protein resides in the chloroplast. It catalyses the reaction 2 5-aminolevulinate = porphobilinogen + 2 H2O + H(+). It functions in the pathway porphyrin-containing compound metabolism; protoporphyrin-IX biosynthesis; coproporphyrinogen-III from 5-aminolevulinate: step 1/4. In terms of biological role, catalyzes an early step in the biosynthesis of tetrapyrroles. Binds two molecules of 5-aminolevulinate per subunit, each at a distinct site, and catalyzes their condensation to form porphobilinogen. The sequence is that of Delta-aminolevulinic acid dehydratase, chloroplastic (HEMB) from Selaginella martensii (Martens's spike moss).